The primary structure comprises 270 residues: 5-amino-6-(5-phospho-D-ribitylamino)uracil phosphatase YitU (270 aa).

Aspartate 11 acts as the Nucleophile in catalysis. A Mg(2+)-binding site is contributed by aspartate 11. Position 12 (leucine 12) interacts with phosphate. Mg(2+) is bound at residue aspartate 13. Residues 45–46 (TG) and lysine 197 contribute to the phosphate site. Aspartate 220 lines the Mg(2+) pocket. Asparagine 223 serves as a coordination point for phosphate.

This sequence belongs to the HAD-like hydrolase superfamily. Cof family. Mg(2+) serves as cofactor.

It catalyses the reaction 5-amino-6-(5-phospho-D-ribitylamino)uracil + H2O = 5-amino-6-(D-ribitylamino)uracil + phosphate. Its pathway is cofactor biosynthesis; riboflavin biosynthesis; 5-amino-6-(D-ribitylamino)uracil from GTP: step 4/4. Functionally, catalyzes the dephosphorylation of the riboflavin precursor 5-amino-6-(5-phospho-D-ribitylamino)uracil and of flavin mononucleotide (FMN) in vitro. The sequence is that of 5-amino-6-(5-phospho-D-ribitylamino)uracil phosphatase YitU (yitU) from Bacillus subtilis (strain 168).